The sequence spans 371 residues: Mitogen-activated protein kinase homolog MMK2 (371 aa).

The Protein kinase domain maps to valine 37–methionine 323. Residues valine 43–valine 51 and lysine 66 each bind ATP. Aspartate 163 (proton acceptor) is an active-site residue. Position 195 is a phosphothreonine (threonine 195). Residues threonine 195–tyrosine 197 carry the TXY motif. Tyrosine 197 carries the phosphotyrosine modification.

It belongs to the protein kinase superfamily. CMGC Ser/Thr protein kinase family. MAP kinase subfamily. Requires Mg(2+) as cofactor. Post-translationally, dually phosphorylated on Thr-195 and Tyr-197, which activates the enzyme. Autophosphorylated.

It carries out the reaction L-seryl-[protein] + ATP = O-phospho-L-seryl-[protein] + ADP + H(+). The catalysed reaction is L-threonyl-[protein] + ATP = O-phospho-L-threonyl-[protein] + ADP + H(+). With respect to regulation, activated by tyrosine and threonine phosphorylation. This Medicago sativa (Alfalfa) protein is Mitogen-activated protein kinase homolog MMK2 (MMK2).